The primary structure comprises 222 residues: Cell division protein FtsQ (222 aa).

Over 1–5 (MNKKV) the chain is Cytoplasmic. The helical transmembrane segment at 6-26 (IAIVVGVVVVLVAILGVVAWF) threads the bilayer. Over 27-222 (VPILKVGNIE…ISSPSMVTVR (196 aa)) the chain is Extracellular. One can recognise a POTRA domain in the interval 30-98 (LKVGNIEVTG…STITVELTER (69 aa)).

The protein belongs to the FtsQ/DivIB family. FtsQ subfamily.

It localises to the cell membrane. Its function is as follows. Essential cell division protein. The polypeptide is Cell division protein FtsQ (Corynebacterium glutamicum (strain ATCC 13032 / DSM 20300 / JCM 1318 / BCRC 11384 / CCUG 27702 / LMG 3730 / NBRC 12168 / NCIMB 10025 / NRRL B-2784 / 534)).